The following is a 221-amino-acid chain: Anti-sigma-W factor RsiW (221 aa).

The Cytoplasmic segment spans residues 1-87 (MKTCHSHDEL…AKWKLKAKRH (87 aa)). Residues histidine 30, cysteine 34, and cysteine 37 each contribute to the Zn(2+) site. A helical transmembrane segment spans residues 88–108 (PILVAAAIFLIMMSAAFFSAW). Residues 109 to 221 (SHTTDGIAVS…GEDDPHSTDN (113 aa)) are Extracellular-facing.

This sequence belongs to the zinc-associated anti-sigma factor (ZAS) superfamily. Anti-sigma-W factor family. The cofactor is Zn(2+). In terms of processing, is processed by three successive proteolytic events. First, the extracellular region of RsiW is cleaved by PrsW (Site-1 cleavage) in response to cell envelope stresses. Next, it undergoes cleavage at an intramembrane site (Site-2 cleavage) mediated by RasP. This cleavage uncovers a cryptic proteolytic tag with conserved alanine residues in the transmembrane segment, that is recognized mainly by the ClpXP protease, which completely degrades the protein in the cytoplasm and leads to the induction of the sigma-W-controlled genes.

It is found in the membrane. Functionally, is the anti-sigma factor for SigW. The presence of RsiW leads to the inactivation of SigW, and its proteolytic destruction to sigma-W activation. This chain is Anti-sigma-W factor RsiW (rsiW), found in Shouchella clausii (strain KSM-K16) (Alkalihalobacillus clausii).